An 82-amino-acid polypeptide reads, in one-letter code: MRLVVCLVFLASFALVCQGQVYKGGYTRPVPRPPPFVRPLPGGPIGPYNGCPVSCRGISFSQARSCCSRLGRCCHVGKGYSG.

The signal sequence occupies residues 1–19 (MRLVVCLVFLASFALVCQG). Pyrrolidone carboxylic acid is present on Gln20. Disulfide bonds link Cys51–Cys66, Cys55–Cys73, and Cys67–Cys74. Residue Ser81 is modified to Serine amide.

The protein belongs to the penaeidin family. In terms of tissue distribution, higher expression in hemocytes and to a lesser extent in heart, testis, gills, intestine, lymphoid organ and hepatopancreas. Traces in eyes and subcuticular epithelium. Not present in the brain.

It localises to the cytoplasmic granule. Antibacterial activity against M.luteus and E.coli bacteria. Antifungal activity against N.crassa and F.oxysporum. Presents chitin-binding activity. This is Penaeidin-3b from Penaeus vannamei (Whiteleg shrimp).